A 413-amino-acid polypeptide reads, in one-letter code: Serine hydroxymethyltransferase (413 aa).

(6S)-5,6,7,8-tetrahydrofolate-binding positions include L119 and G123–L125. K228 bears the N6-(pyridoxal phosphate)lysine mark. E243 is a (6S)-5,6,7,8-tetrahydrofolate binding site.

The protein belongs to the SHMT family. As to quaternary structure, homodimer. Requires pyridoxal 5'-phosphate as cofactor.

Its subcellular location is the cytoplasm. It catalyses the reaction (6R)-5,10-methylene-5,6,7,8-tetrahydrofolate + glycine + H2O = (6S)-5,6,7,8-tetrahydrofolate + L-serine. The protein operates within one-carbon metabolism; tetrahydrofolate interconversion. Its pathway is amino-acid biosynthesis; glycine biosynthesis; glycine from L-serine: step 1/1. Catalyzes the reversible interconversion of serine and glycine with tetrahydrofolate (THF) serving as the one-carbon carrier. This reaction serves as the major source of one-carbon groups required for the biosynthesis of purines, thymidylate, methionine, and other important biomolecules. Also exhibits THF-independent aldolase activity toward beta-hydroxyamino acids, producing glycine and aldehydes, via a retro-aldol mechanism. The sequence is that of Serine hydroxymethyltransferase from Desulforamulus reducens (strain ATCC BAA-1160 / DSM 100696 / MI-1) (Desulfotomaculum reducens).